Reading from the N-terminus, the 307-residue chain is F-box protein PP2-B7 (307 aa).

Positions 37 to 83 constitute an F-box domain; it reads PLSLGDLPEECISLIISFTSPRDACVFALVSKTFESAVQSDIVWEKF.

The chain is F-box protein PP2-B7 (PP2B7) from Arabidopsis thaliana (Mouse-ear cress).